The following is a 221-amino-acid chain: Thiol:disulfide interchange protein TlpA (221 aa).

Residues 1-11 (MLDTKPSATRR) are Cytoplasmic-facing. The chain crosses the membrane as a helical span at residues 12-35 (IPLVIATVAVGGLAGFAALYGLGL). The Periplasmic portion of the chain corresponds to 36–221 (SRAPTGDPAC…AATGKAAAAL (186 aa)). Intrachain disulfides connect Cys-45–Cys-190 and Cys-107–Cys-110. A Thioredoxin domain is found at 69-215 (ASAPLKLPDL…ALKLIRAATG (147 aa)).

This sequence belongs to the thioredoxin family. As to quaternary structure, monomer.

The protein localises to the cell membrane. Functionally, involved in cytochrome aa3 assembly. In Bradyrhizobium diazoefficiens (strain JCM 10833 / BCRC 13528 / IAM 13628 / NBRC 14792 / USDA 110), this protein is Thiol:disulfide interchange protein TlpA (tlpA).